Consider the following 205-residue polypeptide: MLAVFLQGFALSAAMILPLGPQNAFVMNQGIKRQHHLMSASLCALSDIILICAGIFGGSALLNRSPLLLALVTWGGVAFLLWYGWGALMAAWRGDSSSAAVAAGTQGRWRIIVTLLAVTWLNPHVYLDTFVVLGSLGGQLLPDVRPWFAFGAVSASVAWFFALALLAAWLSPWLNRPGSQRVINLLVGGVMWFIAFQLARQGLNL.

A run of 6 helical transmembrane segments spans residues 1–21 (MLAV…PLGP), 42–62 (LCAL…SALL), 67–87 (LLLA…GWGA), 111–131 (IIVT…DTFV), 147–167 (WFAF…ALLA), and 182–202 (VINL…ARQG).

The protein belongs to the LysE/ArgO transporter (TC 2.A.75) family.

It is found in the cell inner membrane. The enzyme catalyses L-arginine(in) = L-arginine(out). Functionally, involved in the export of arginine. Important to control the intracellular level of arginine and the correct balance between arginine and lysine. The sequence is that of Arginine exporter protein ArgO from Yersinia enterocolitica serotype O:8 / biotype 1B (strain NCTC 13174 / 8081).